Here is a 664-residue protein sequence, read N- to C-terminus: Protein-arginine deiminase type-3 (664 aa).

This sequence belongs to the protein arginine deiminase family. Ca(2+) serves as cofactor. As to expression, epidermis and hair follicles.

Its subcellular location is the cytoplasm. It catalyses the reaction L-arginyl-[protein] + H2O = L-citrullyl-[protein] + NH4(+). Functionally, catalyzes the deimination of arginine residues of proteins. This Rattus norvegicus (Rat) protein is Protein-arginine deiminase type-3 (Padi3).